The following is a 387-amino-acid chain: Phosphoglycerate kinase (387 aa).

Substrate-binding positions include 21–23, arginine 36, 59–62, arginine 113, and arginine 146; these read DLN and HLGR. Residues lysine 197, glutamate 314, and 340-343 each bind ATP; that span reads GGDT.

The protein belongs to the phosphoglycerate kinase family. As to quaternary structure, monomer.

It is found in the cytoplasm. The catalysed reaction is (2R)-3-phosphoglycerate + ATP = (2R)-3-phospho-glyceroyl phosphate + ADP. It functions in the pathway carbohydrate degradation; glycolysis; pyruvate from D-glyceraldehyde 3-phosphate: step 2/5. This is Phosphoglycerate kinase from Aliivibrio fischeri (strain MJ11) (Vibrio fischeri).